Consider the following 409-residue polypeptide: AP-1-like transcription factor YAP2 (409 aa).

2 consecutive short sequence motifs (bipartite nuclear localization signal) follow at residues 17 to 24 and 47 to 54; these read MKKQMLLN and SRRTAQNR. The disordered stretch occupies residues 26-64; the sequence is DGTPKRKVGRPGRKRIDSEAKSRRTAQNRAAQRAFRDRK. In terms of domain architecture, bZIP spans 43–106; that stretch reads SEAKSRRTAQ…KSLLSEITKY (64 aa). Residues 46–69 are basic motif; the sequence is KSRRTAQNRAAQRAFRDRKEAKMK. The tract at residues 71-99 is leucine-zipper; sequence LQERVELLEQKDAQNKTTTDFLLCSLKSL. The disordered stretch occupies residues 127–156; it reads QKRENEKGTSTAVSKAAKELPSPNSDENMT. The segment at 356–387 is c-CRD; that stretch reads CYHILEEISSLPKYSSLDIDDLCSELIIKAKC. Positions 372–379 match the Nuclear export signal motif; the sequence is LDIDDLCS.

This sequence belongs to the bZIP family. YAP subfamily. As to quaternary structure, homodimer; disulfide-linked, upon oxidation. Interacts in the nucleus with the nuclear export protein CRM1. Interacts with RCK1. Depending on the oxidative stress inducing agent, CAD1/YAP2 can undergo two distinct conformational changes, both through oxidation of cysteine residues, and both masking the nuclear export signal, thus abolishing nuclear export by CRM1/exportin 1. Peroxide stress induces the formation of possible intramolecular disulfide bonds as well as intermolcular disulfide within a homodimer. Cadmium may bind directly to specific cysteine residues (Cys-391 and either Cys-356 or Cys-387) in the c-CRD.

The protein resides in the cytoplasm. It is found in the nucleus. Its function is as follows. Transcription activator involved in oxidative stress response and cadmium resistance. Regulates the transcription of genes overrepresented for the function of stabilizing proteins including the inducible Hsp90-family protein HSP82. Preferentially binds to promoters with the core binding site 5'-TTA[CG]TAA-3'. Activity of the transcription factor is controlled through oxidation of specific cysteine residues resulting in the alteration of its subcellular location. Activation by alkyl hydroperoxides or cadmium induces nuclear accumulation and as a result CAD1/YAP2 transcriptional activity. This is AP-1-like transcription factor YAP2 from Saccharomyces cerevisiae (strain ATCC 204508 / S288c) (Baker's yeast).